We begin with the raw amino-acid sequence, 341 residues long: Ribosomal RNA small subunit methyltransferase C (341 aa).

This sequence belongs to the methyltransferase superfamily. RsmC family. Monomer.

The protein localises to the cytoplasm. The enzyme catalyses guanosine(1207) in 16S rRNA + S-adenosyl-L-methionine = N(2)-methylguanosine(1207) in 16S rRNA + S-adenosyl-L-homocysteine + H(+). Functionally, specifically methylates the guanine in position 1207 of 16S rRNA in the 30S particle. The polypeptide is Ribosomal RNA small subunit methyltransferase C (Shewanella amazonensis (strain ATCC BAA-1098 / SB2B)).